Consider the following 412-residue polypeptide: MNWKDKVKTTFYSCDRFVRFVIQHFIQDDCTYIASALAFTSLLAVVPLMSVGLAIFSSFPVFQGLAEPVQNFIFDNFVPATGKIVQSYLQQFTSQVSKLSIWGIVFLIFTALLVMFTIERAMNKIWRVSSSRHGVSAFLLYWAIISLAPVLLGLSLAASSYLFSMPILADHRAPYTILHYSPFFLSLIGFTFLYVVVPNCPVKIRHAFWGGLVAAILFESAKHAFAYYLIRYNTYALLYGAFATVPIFFIWVYWVWIITLLGAEISYAFSVHHQRRGGKSLDGFSHALLWLHQLWLAQQHGKGLSFNDLVDASKQPFAVDVDEMINALIYHELIHATADGHYMLSRDLSHVTLYDLTQLLPYRLPTHLELQYSKASLAEQWRAAFKRHNEELKKSLDINLEELFKKTGTVIK.

The next 6 helical transmembrane spans lie at 36 to 56, 99 to 119, 137 to 157, 177 to 197, 210 to 230, and 241 to 261; these read ALAF…LAIF, LSIW…FTIE, AFLL…LSLA, ILHY…YVVV, GGLV…YYLI, and AFAT…ITLL.

Belongs to the UPF0761 family.

Its subcellular location is the cell inner membrane. This chain is UPF0761 membrane protein lpg0643, found in Legionella pneumophila subsp. pneumophila (strain Philadelphia 1 / ATCC 33152 / DSM 7513).